The following is a 152-amino-acid chain: SsrA-binding protein (152 aa).

This sequence belongs to the SmpB family.

It is found in the cytoplasm. Functionally, required for rescue of stalled ribosomes mediated by trans-translation. Binds to transfer-messenger RNA (tmRNA), required for stable association of tmRNA with ribosomes. tmRNA and SmpB together mimic tRNA shape, replacing the anticodon stem-loop with SmpB. tmRNA is encoded by the ssrA gene; the 2 termini fold to resemble tRNA(Ala) and it encodes a 'tag peptide', a short internal open reading frame. During trans-translation Ala-aminoacylated tmRNA acts like a tRNA, entering the A-site of stalled ribosomes, displacing the stalled mRNA. The ribosome then switches to translate the ORF on the tmRNA; the nascent peptide is terminated with the 'tag peptide' encoded by the tmRNA and targeted for degradation. The ribosome is freed to recommence translation, which seems to be the essential function of trans-translation. The chain is SsrA-binding protein from Rickettsia akari (strain Hartford).